The chain runs to 143 residues: Transcriptional regulator MraZ (143 aa).

SpoVT-AbrB domains lie at 5 to 47 (EYQH…PQEE) and 76 to 119 (ASEC…SKSE).

Belongs to the MraZ family. Forms oligomers.

It localises to the cytoplasm. It is found in the nucleoid. The protein is Transcriptional regulator MraZ of Listeria monocytogenes serotype 4b (strain CLIP80459).